Consider the following 154-residue polypeptide: Lymphocyte antigen 6K (154 aa).

The signal sequence occupies residues 1–20 (MAFLVALLVVLGLQLVQSNA). Positions 21–117 (LTCHVCEAQN…NGEGPPTDQL (97 aa)) constitute a UPAR/Ly6 domain. Gly123 carries GPI-anchor amidated glycine lipidation. Residues 124–154 (KASGRRHRYIELLLTGFMVLTANGLSALCLL) constitute a propeptide, removed in mature form.

In terms of assembly, interacts with ADAM3 and TEX101. In terms of tissue distribution, strongly expressed in testes and weakly expressed in the epididymis, ovary, and uterus. Expressed in testicular germ cells (TGCs). Expressed in the testicular seminiferous tubules, in spermatocytes, spermatids, and testicular spermatozoa.

It is found in the secreted. The protein resides in the cytoplasm. It localises to the cell membrane. Its subcellular location is the cytoplasmic vesicle. The protein localises to the secretory vesicle. It is found in the acrosome. The protein resides in the membrane raft. Required for sperm migration into the oviduct and male fertility by controlling binding of sperm to zona pellucida. May play a role in cell growth. The polypeptide is Lymphocyte antigen 6K (Mus musculus (Mouse)).